The following is a 227-amino-acid chain: ATP synthase F(0) complex subunit a (227 aa).

Transmembrane regions (helical) follow at residues Pro-12–Pro-32, Trp-69–Leu-89, Gln-98–Met-118, Glu-132–Ile-152, Phe-180–Leu-200, and Leu-202–Tyr-222.

The protein belongs to the ATPase A chain family. Component of the ATP synthase complex composed at least of ATP5F1A/subunit alpha, ATP5F1B/subunit beta, ATP5MC1/subunit c (homooctomer), MT-ATP6/subunit a, MT-ATP8/subunit 8, ATP5ME/subunit e, ATP5MF/subunit f, ATP5MG/subunit g, ATP5MK/subunit k, ATP5MJ/subunit j, ATP5F1C/subunit gamma, ATP5F1D/subunit delta, ATP5F1E/subunit epsilon, ATP5PF/subunit F6, ATP5PB/subunit b, ATP5PD/subunit d, ATP5PO/subunit OSCP. ATP synthase complex consists of a soluble F(1) head domain (subunits alpha(3) and beta(3)) - the catalytic core - and a membrane F(0) domain - the membrane proton channel (subunits c, a, 8, e, f, g, k and j). These two domains are linked by a central stalk (subunits gamma, delta, and epsilon) rotating inside the F1 region and a stationary peripheral stalk (subunits F6, b, d, and OSCP). Interacts with DNAJC30; interaction is direct.

Its subcellular location is the mitochondrion inner membrane. The catalysed reaction is H(+)(in) = H(+)(out). Subunit a, of the mitochondrial membrane ATP synthase complex (F(1)F(0) ATP synthase or Complex V) that produces ATP from ADP in the presence of a proton gradient across the membrane which is generated by electron transport complexes of the respiratory chain. ATP synthase complex consist of a soluble F(1) head domain - the catalytic core - and a membrane F(1) domain - the membrane proton channel. These two domains are linked by a central stalk rotating inside the F(1) region and a stationary peripheral stalk. During catalysis, ATP synthesis in the catalytic domain of F(1) is coupled via a rotary mechanism of the central stalk subunits to proton translocation. With the subunit c (ATP5MC1), forms the proton-conducting channel in the F(0) domain, that contains two crucial half-channels (inlet and outlet) that facilitate proton movement from the mitochondrial intermembrane space (IMS) into the matrix. Protons are taken up via the inlet half-channel and released through the outlet half-channel, following a Grotthuss mechanism. This Salmo salar (Atlantic salmon) protein is ATP synthase F(0) complex subunit a.